The sequence spans 691 residues: Elongation factor G (691 aa).

The tr-type G domain maps to 8-283; that stretch reads KKVRNIGIAA…AVVAYLPAPD (276 aa). GTP contacts are provided by residues 17-24, 81-85, and 135-138; these read AHIDAGKT, DTPGH, and NKMD.

It belongs to the TRAFAC class translation factor GTPase superfamily. Classic translation factor GTPase family. EF-G/EF-2 subfamily.

It localises to the cytoplasm. Catalyzes the GTP-dependent ribosomal translocation step during translation elongation. During this step, the ribosome changes from the pre-translocational (PRE) to the post-translocational (POST) state as the newly formed A-site-bound peptidyl-tRNA and P-site-bound deacylated tRNA move to the P and E sites, respectively. Catalyzes the coordinated movement of the two tRNA molecules, the mRNA and conformational changes in the ribosome. The sequence is that of Elongation factor G from Campylobacter jejuni subsp. jejuni serotype O:6 (strain 81116 / NCTC 11828).